The sequence spans 240 residues: MSLEPVYKRVLLKASGEALMGGQGFGIDVTVADRIASDIAEARHMGVEVGVVVGGGNIFRGVAVASKGGDRVTGDHMGMLGTIINALALATSLRKLNIDTVVLSAISMPEICESFSQRATLYHLSMGRVVIFAGGTGNPFFTTDSAAALRAAEMGAEAIFKGTQVDGIYTADPKKYPDATRLDRLTHQEVLDRGLAVMDVAAVALARENSIPIIVFSIHEKGGFAEILTGGGLKTIVSDN.

Position 13–16 (13–16 (KASG)) interacts with ATP. Residues 21 to 26 (GGQGFG) form an involved in allosteric activation by GTP region. Gly55 is a binding site for UMP. Gly56 and Arg60 together coordinate ATP. UMP is bound by residues Asp75 and 136 to 143 (TGNPFFTT). ATP is bound by residues Thr163, Gln164, Tyr169, and Asp172.

The protein belongs to the UMP kinase family. Homohexamer.

It localises to the cytoplasm. It carries out the reaction UMP + ATP = UDP + ADP. Its pathway is pyrimidine metabolism; CTP biosynthesis via de novo pathway; UDP from UMP (UMPK route): step 1/1. Its activity is regulated as follows. Allosterically activated by GTP. Inhibited by UTP. In terms of biological role, catalyzes the reversible phosphorylation of UMP to UDP. The chain is Uridylate kinase from Rhizobium johnstonii (strain DSM 114642 / LMG 32736 / 3841) (Rhizobium leguminosarum bv. viciae).